A 270-amino-acid chain; its full sequence is uncharacterized protein (270 aa).

Positions 1–22 (MEYIKKIALYMSVLLLIIFIGG) are cleaved as a signal peptide. The N-palmitoyl cysteine moiety is linked to residue Cys-23. Cys-23 carries S-diacylglycerol cysteine lipidation.

It belongs to the staphylococcal tandem lipoprotein family.

The protein resides in the cell membrane. This is an uncharacterized protein from Staphylococcus aureus (strain USA300).